The following is a 113-amino-acid chain: Large ribosomal subunit protein uL22 (113 aa).

It belongs to the universal ribosomal protein uL22 family. As to quaternary structure, part of the 50S ribosomal subunit.

Functionally, this protein binds specifically to 23S rRNA; its binding is stimulated by other ribosomal proteins, e.g. L4, L17, and L20. It is important during the early stages of 50S assembly. It makes multiple contacts with different domains of the 23S rRNA in the assembled 50S subunit and ribosome. The globular domain of the protein is located near the polypeptide exit tunnel on the outside of the subunit, while an extended beta-hairpin is found that lines the wall of the exit tunnel in the center of the 70S ribosome. The sequence is that of Large ribosomal subunit protein uL22 from Natranaerobius thermophilus (strain ATCC BAA-1301 / DSM 18059 / JW/NM-WN-LF).